A 371-amino-acid polypeptide reads, in one-letter code: UDP-N-acetylglucosamine--N-acetylmuramyl-(pentapeptide) pyrophosphoryl-undecaprenol N-acetylglucosamine transferase (371 aa).

UDP-N-acetyl-alpha-D-glucosamine contacts are provided by residues 15 to 17, Asn126, Arg172, Ser199, Ile256, 275 to 280, and Gln301; these read TGG and ALTVSE.

The protein belongs to the glycosyltransferase 28 family. MurG subfamily.

The protein resides in the cell inner membrane. The catalysed reaction is di-trans,octa-cis-undecaprenyl diphospho-N-acetyl-alpha-D-muramoyl-L-alanyl-D-glutamyl-meso-2,6-diaminopimeloyl-D-alanyl-D-alanine + UDP-N-acetyl-alpha-D-glucosamine = di-trans,octa-cis-undecaprenyl diphospho-[N-acetyl-alpha-D-glucosaminyl-(1-&gt;4)]-N-acetyl-alpha-D-muramoyl-L-alanyl-D-glutamyl-meso-2,6-diaminopimeloyl-D-alanyl-D-alanine + UDP + H(+). It functions in the pathway cell wall biogenesis; peptidoglycan biosynthesis. In terms of biological role, cell wall formation. Catalyzes the transfer of a GlcNAc subunit on undecaprenyl-pyrophosphoryl-MurNAc-pentapeptide (lipid intermediate I) to form undecaprenyl-pyrophosphoryl-MurNAc-(pentapeptide)GlcNAc (lipid intermediate II). The protein is UDP-N-acetylglucosamine--N-acetylmuramyl-(pentapeptide) pyrophosphoryl-undecaprenol N-acetylglucosamine transferase of Francisella tularensis subsp. holarctica (strain FTNF002-00 / FTA).